The following is a 64-amino-acid chain: Large ribosomal subunit protein uL29 (64 aa).

This sequence belongs to the universal ribosomal protein uL29 family.

The sequence is that of Large ribosomal subunit protein uL29 from Legionella pneumophila (strain Lens).